The sequence spans 107 residues: Disintegrin lebestatin (107 aa).

Positions 1 to 20 (MIQVLLVIICLAVFPFQGSS) are cleaved as a signal peptide. Residues 21–64 (KTLKSGNVNDYEVVNPGTVTGLPKGAVEEKHEPMKGNTLQKFPL) constitute a propeptide that is removed on maturation. 4 disulfides stabilise this stretch: C65–C74, C70–C93, C71–C98, and C83–C100. The Disintegrin domain occupies 65–105 (CTTGPCCRQCKLKPAGTTCWKTSRTSHYCTGKSCDCPSYPG). The short motif at 85–87 (KTS) is the Cell attachment site; atypical (KTS) element. Positions 106–107 (NG) are excised as a propeptide.

In terms of assembly, monomer. Expressed by the venom gland.

It is found in the secreted. Specifically interacts with the alpha-1/beta-1 integrin (ITGA1/ITGB1). Exhibits highly inhibitory effects on cell adhesion and cell migration to collagens I and IV. Also shows in vivo anti-angiogenic activity. This Macrovipera lebetinus (Levantine viper) protein is Disintegrin lebestatin.